The following is an 845-amino-acid chain: ABC transporter A family member 9 (845 aa).

Transmembrane regions (helical) follow at residues 33–53 (CVQISIPLILVIILVIVNFWV), 192–212 (AFVAFSMNTMTTTILNYFLGG), 235–255 (IASLLGGSFYPFALSFIMPLF), 292–312 (IYFIIIVFVVGVSSIFGFAVF), 318–338 (FAMFLFLFAWGNSMITFSFFL), 347–367 (AASIFGYFLVIIAVNLNSILS), and 417–437 (SKIIFWLYIDAIVYLLIALYL). Residues 531–762 (VIIEGLTKHY…FGDGYSVRIN (232 aa)) form the ABC transporter domain. Residue 565 to 572 (GANGAGKT) coordinates ATP.

It belongs to the ABC transporter superfamily. ABCA family.

It localises to the membrane. This chain is ABC transporter A family member 9 (abcA9), found in Dictyostelium discoideum (Social amoeba).